The sequence spans 125 residues: Small ribosomal subunit protein uS12 (125 aa).

Positions 1–30 (MPTISQLVRKPRAAKPLKSKVPALGNSPQK) are disordered. Residues 9-18 (RKPRAAKPLK) are compositionally biased toward basic residues. At D89 the chain carries 3-methylthioaspartic acid. Positions 103–125 (DTAGVKDRKQGRSKYGAKKPKSA) are disordered. Positions 113 to 125 (GRSKYGAKKPKSA) are enriched in basic residues.

This sequence belongs to the universal ribosomal protein uS12 family. As to quaternary structure, part of the 30S ribosomal subunit. Contacts proteins S8 and S17. May interact with IF1 in the 30S initiation complex.

In terms of biological role, with S4 and S5 plays an important role in translational accuracy. Its function is as follows. Interacts with and stabilizes bases of the 16S rRNA that are involved in tRNA selection in the A site and with the mRNA backbone. Located at the interface of the 30S and 50S subunits, it traverses the body of the 30S subunit contacting proteins on the other side and probably holding the rRNA structure together. The combined cluster of proteins S8, S12 and S17 appears to hold together the shoulder and platform of the 30S subunit. The protein is Small ribosomal subunit protein uS12 of Nitrosospira multiformis (strain ATCC 25196 / NCIMB 11849 / C 71).